Reading from the N-terminus, the 690-residue chain is Elongation factor G (690 aa).

Residues 8-283 form the tr-type G domain; it reads DKYRNIGIMA…AVVDFLPSPL (276 aa). GTP-binding positions include 17–24, 81–85, and 135–138; these read AHIDAGKT, DTPGH, and NKLD.

It belongs to the TRAFAC class translation factor GTPase superfamily. Classic translation factor GTPase family. EF-G/EF-2 subfamily.

It is found in the cytoplasm. Its function is as follows. Catalyzes the GTP-dependent ribosomal translocation step during translation elongation. During this step, the ribosome changes from the pre-translocational (PRE) to the post-translocational (POST) state as the newly formed A-site-bound peptidyl-tRNA and P-site-bound deacylated tRNA move to the P and E sites, respectively. Catalyzes the coordinated movement of the two tRNA molecules, the mRNA and conformational changes in the ribosome. The polypeptide is Elongation factor G (Zymomonas mobilis subsp. mobilis (strain ATCC 31821 / ZM4 / CP4)).